Consider the following 123-residue polypeptide: Holo-[acyl-carrier-protein] synthase (123 aa).

2 residues coordinate Mg(2+): D8 and E50.

The protein belongs to the P-Pant transferase superfamily. AcpS family. The cofactor is Mg(2+).

The protein resides in the cytoplasm. The catalysed reaction is apo-[ACP] + CoA = holo-[ACP] + adenosine 3',5'-bisphosphate + H(+). Functionally, transfers the 4'-phosphopantetheine moiety from coenzyme A to a Ser of acyl-carrier-protein. The chain is Holo-[acyl-carrier-protein] synthase from Kocuria rhizophila (strain ATCC 9341 / DSM 348 / NBRC 103217 / DC2201).